The following is a 163-amino-acid chain: MASDQDNSGLDAPGSQFHRPILQSMPDTRQQSFDEIYGPPENFLEIEVRNPRTHGMGRHMYTDYEILCRTNIPAFKLRQSSVRRRYSDFEYFRDILERESARVTIPPLPGKVFTNRFSDDVIEGRRAGLEKFLKIVVGHPLLQTGSKVLAAFVQDPNWDRNAW.

A disordered region spans residues 1-20; sequence MASDQDNSGLDAPGSQFHRP. The 118-residue stretch at 42–159 folds into the PX domain; that stretch reads NFLEIEVRNP…AAFVQDPNWD (118 aa). The a 1,2-diacyl-sn-glycero-3-phospho-(1D-myo-inositol-3-phosphate) site is built by Arg-85, Ser-87, Lys-111, Arg-116, and Arg-125.

The protein belongs to the sorting nexin family.

The protein resides in the cytoplasm. It is found in the golgi apparatus membrane. Its subcellular location is the prevacuolar compartment membrane. In terms of biological role, required for retention of late Golgi membrane proteins. Component of the retrieval machinery that functions by direct interaction with the cytosolic tails of certain TGN membrane proteins during the sorting/budding process at the prevacuolar compartment. Binds phosphatidylinositol 3-phosphate (PtdIns(P3)). This chain is Sorting nexin-3 (SNX3), found in Gibberella zeae (strain ATCC MYA-4620 / CBS 123657 / FGSC 9075 / NRRL 31084 / PH-1) (Wheat head blight fungus).